The primary structure comprises 113 residues: U11-theraphotoxin-Hhn1a (113 aa).

An N-terminal signal peptide occupies residues 1–21; the sequence is MNTVRVTFLLVFVLAVSLGQA. Positions 22-74 are excised as a propeptide; the sequence is DKDENRMEMQEKTEQGKSYLDFAENLLLQKLEELEAKLLEEDSEESRNSRQRR. Residues 61–83 are disordered; sequence EEDSEESRNSRQRRCIGEGVPCD. Intrachain disulfides connect Cys75/Cys90, Cys82/Cys95, and Cys89/Cys110.

Belongs to the neurotoxin 14 (magi-1) family. 01 (HNTX-16) subfamily. Expressed by the venom gland.

Its subcellular location is the secreted. In terms of biological role, probable ion channel inhibitor. This chain is U11-theraphotoxin-Hhn1a, found in Cyriopagopus hainanus (Chinese bird spider).